Reading from the N-terminus, the 295-residue chain is Probable WRKY transcription factor 46 (295 aa).

Positions 98 to 166 (QENGSIDDGH…YLGNHTCNNI (69 aa)) form a DNA-binding region, WRKY.

Belongs to the WRKY group III family. Binds to BZR2/BES1 to cooperatively regulate the expression of target genes. Post-translationally, phosphorylated and destabilized by ASK7/BIN2. In terms of tissue distribution, expressed in guard cells, hypocotyls, and in the vascular tissues of cotyledon and root. Mostly expressed in roots, at lower levels in leaves and petioles, and, to a lower extent, in stems, flowers and siliques.

Its subcellular location is the nucleus. Functionally, transcription factor involved in the regulation of osmotic stress responses and stomatal movement. Interacts specifically with the W box (5'-(T)TGAC[CT]-3'), a frequently occurring elicitor-responsive cis-acting element. Positive regulator of EDS1-dependent defense against E.amylovora. Together with WRKY70 and WRKY53, promotes resistance to P.syringae, probably by enhancing salicylic acid (SA)- dependent genes. Contributes to the suppression of jasmonic acid (MeJA)-induced expression of PDF1.2. Together with WRKY54 and WRKY70, promotes brassinosteroid (BR)-regulated plant growth but prevent drought response by modulating gene expression. The sequence is that of Probable WRKY transcription factor 46 (WRKY46) from Arabidopsis thaliana (Mouse-ear cress).